Here is a 130-residue protein sequence, read N- to C-terminus: Holo-[acyl-carrier-protein] synthase (130 aa).

Mg(2+) contacts are provided by D8 and E62.

The protein belongs to the P-Pant transferase superfamily. AcpS family. It depends on Mg(2+) as a cofactor.

It is found in the cytoplasm. The catalysed reaction is apo-[ACP] + CoA = holo-[ACP] + adenosine 3',5'-bisphosphate + H(+). In terms of biological role, transfers the 4'-phosphopantetheine moiety from coenzyme A to a Ser of acyl-carrier-protein. This chain is Holo-[acyl-carrier-protein] synthase, found in Herminiimonas arsenicoxydans.